The following is a 206-amino-acid chain: Holliday junction branch migration complex subunit RuvA (206 aa).

A domain I region spans residues 1 to 64 (MIGKLKGVLD…EDMIRLYGFR (64 aa)). The domain II stretch occupies residues 65-144 (TVLEREWFRL…AFAGEAAGAI (80 aa)). Residues 145–154 (GLKQDLGEGV) form a flexible linker region. Residues 154 to 206 (VAPAPVSDAVSALANLGYSRDIAANAVAAALKSAGEGADTGTLIRLGLKELAR) form a domain III region.

The protein belongs to the RuvA family. In terms of assembly, homotetramer. Forms an RuvA(8)-RuvB(12)-Holliday junction (HJ) complex. HJ DNA is sandwiched between 2 RuvA tetramers; dsDNA enters through RuvA and exits via RuvB. An RuvB hexamer assembles on each DNA strand where it exits the tetramer. Each RuvB hexamer is contacted by two RuvA subunits (via domain III) on 2 adjacent RuvB subunits; this complex drives branch migration. In the full resolvosome a probable DNA-RuvA(4)-RuvB(12)-RuvC(2) complex forms which resolves the HJ.

The protein resides in the cytoplasm. Its function is as follows. The RuvA-RuvB-RuvC complex processes Holliday junction (HJ) DNA during genetic recombination and DNA repair, while the RuvA-RuvB complex plays an important role in the rescue of blocked DNA replication forks via replication fork reversal (RFR). RuvA specifically binds to HJ cruciform DNA, conferring on it an open structure. The RuvB hexamer acts as an ATP-dependent pump, pulling dsDNA into and through the RuvAB complex. HJ branch migration allows RuvC to scan DNA until it finds its consensus sequence, where it cleaves and resolves the cruciform DNA. The polypeptide is Holliday junction branch migration complex subunit RuvA (Chelativorans sp. (strain BNC1)).